The chain runs to 120 residues: Hydrogenase maturation factor HypA (120 aa).

Position 2 (His-2) interacts with Ni(2+). Positions 73, 76, 89, and 92 each coordinate Zn(2+).

This sequence belongs to the HypA/HybF family.

In terms of biological role, involved in the maturation of [NiFe] hydrogenases. Required for nickel insertion into the metal center of the hydrogenase. The protein is Hydrogenase maturation factor HypA of Deinococcus radiodurans (strain ATCC 13939 / DSM 20539 / JCM 16871 / CCUG 27074 / LMG 4051 / NBRC 15346 / NCIMB 9279 / VKM B-1422 / R1).